We begin with the raw amino-acid sequence, 321 residues long: tRNA dimethylallyltransferase (321 aa).

25–32 (GPTASGKS) lines the ATP pocket. 27-32 (TASGKS) is a binding site for substrate. The tract at residues 50 to 53 (DSMQ) is interaction with substrate tRNA.

The protein belongs to the IPP transferase family. In terms of assembly, monomer. Mg(2+) is required as a cofactor.

The catalysed reaction is adenosine(37) in tRNA + dimethylallyl diphosphate = N(6)-dimethylallyladenosine(37) in tRNA + diphosphate. Its function is as follows. Catalyzes the transfer of a dimethylallyl group onto the adenine at position 37 in tRNAs that read codons beginning with uridine, leading to the formation of N6-(dimethylallyl)adenosine (i(6)A). This Rhodopseudomonas palustris (strain ATCC BAA-98 / CGA009) protein is tRNA dimethylallyltransferase.